The following is a 402-amino-acid chain: Oxysterol-binding protein 8 (402 aa).

The stretch at 328–361 (DRIALEEGNLDVAAKEKHNLEEKQREDKRQRVAE) forms a coiled coil.

Belongs to the OSBP family.

In Dictyostelium discoideum (Social amoeba), this protein is Oxysterol-binding protein 8 (osbH).